The chain runs to 201 residues: MKKILTTPIKAEDLQDIRVDDVIYLTGTLVTCRDVCHRRLIELKRPIPYDLNGKAIFHAGPIVRKNGDKWEMVSVGPTTSMRMESFEREFIEQTGVKLVVGKGGMGPLTEEGCQKFKALHVIFPAGCAVLAATQVEEIEEVHWTELGMPESLWVCRVKEFGPLIVSIDTHGNNLIAENKKLFAERRDPIVEEICEHVHYIK.

Residue His-37 is part of the active site.

It belongs to the class-I fumarase family. As to quaternary structure, heterotetramer of two alpha and two beta subunits.

The enzyme catalyses (2R,3R)-tartrate = oxaloacetate + H2O. This chain is L(+)-tartrate dehydratase subunit beta (ttdB), found in Shigella sonnei (strain Ss046).